A 137-amino-acid polypeptide reads, in one-letter code: Acidic phospholipase A2 VP8 (137 aa).

The N-terminal stretch at 1–16 (MRILWIVAVCLIGVEG) is a signal peptide. Cystine bridges form between Cys41/Cys130, Cys43/Cys59, Cys58/Cys110, Cys64/Cys137, Cys65/Cys103, Cys72/Cys96, and Cys90/Cys101. The Ca(2+) site is built by Tyr42, Gly44, and Gly46. Residue His62 is part of the active site. Residue Asp63 coordinates Ca(2+). Asp104 is an active-site residue.

This sequence belongs to the phospholipase A2 family. Group II subfamily. D49 sub-subfamily. Does not form a complex. The cofactor is Ca(2+). As to expression, expressed by the venom gland.

The protein localises to the secreted. It catalyses the reaction a 1,2-diacyl-sn-glycero-3-phosphocholine + H2O = a 1-acyl-sn-glycero-3-phosphocholine + a fatty acid + H(+). Snake venom phospholipase A2 (PLA2) that is not toxic by itself, but the synergistical mixture of a basic and this acidic protein is lethal. PLA2 catalyzes the calcium-dependent hydrolysis of the 2-acyl groups in 3-sn-phosphoglycerides. The chain is Acidic phospholipase A2 VP8 from Daboia palaestinae (Palestine viper).